The chain runs to 158 residues: uncharacterized protein (158 aa).

4 consecutive transmembrane segments (helical) span residues 42–62 (FHFA…GFLY), 71–91 (WIFI…HLIA), 102–122 (LLTG…QMFL), and 130–150 (ELII…PLLF).

The protein localises to the cell membrane. This is an uncharacterized protein from Bacillus subtilis (strain 168).